Consider the following 153-residue polypeptide: Ribosome maturation factor RimP (153 aa).

The protein belongs to the RimP family.

It is found in the cytoplasm. Functionally, required for maturation of 30S ribosomal subunits. The protein is Ribosome maturation factor RimP of Christiangramia forsetii (strain DSM 17595 / CGMCC 1.15422 / KT0803) (Gramella forsetii).